The following is a 277-amino-acid chain: Large ribosomal subunit protein uL2 (277 aa).

Positions 222-277 (GVAMNPIDHPHGGGEGRTSGGRHPVTPWGKPTKGKKTRTNKSTDKFILLSRHKRKK) are disordered.

This sequence belongs to the universal ribosomal protein uL2 family. Part of the 50S ribosomal subunit. Forms a bridge to the 30S subunit in the 70S ribosome.

Functionally, one of the primary rRNA binding proteins. Required for association of the 30S and 50S subunits to form the 70S ribosome, for tRNA binding and peptide bond formation. It has been suggested to have peptidyltransferase activity; this is somewhat controversial. Makes several contacts with the 16S rRNA in the 70S ribosome. The polypeptide is Large ribosomal subunit protein uL2 (Bradyrhizobium sp. (strain ORS 278)).